Reading from the N-terminus, the 326-residue chain is Probable cell division protein WhiA (326 aa).

Residues 275-308 constitute a DNA-binding region (H-T-H motif); that stretch reads SLEELGQLADPPLTKDAIAGRIRRLLAMADKRAA.

The protein belongs to the WhiA family.

In terms of biological role, involved in cell division and chromosome segregation. The protein is Probable cell division protein WhiA of Thermobifida fusca (strain YX).